A 344-amino-acid chain; its full sequence is Arginine N-succinyltransferase (344 aa).

Leu-125 is a succinyl-CoA binding site. The active-site Proton donor is His-229.

It belongs to the arginine N-succinyltransferase family.

It carries out the reaction succinyl-CoA + L-arginine = N(2)-succinyl-L-arginine + CoA + H(+). Its pathway is amino-acid degradation; L-arginine degradation via AST pathway; L-glutamate and succinate from L-arginine: step 1/5. In terms of biological role, catalyzes the transfer of succinyl-CoA to arginine to produce N(2)-succinylarginine. The sequence is that of Arginine N-succinyltransferase from Escherichia coli (strain UTI89 / UPEC).